Consider the following 533-residue polypeptide: Glucose-6-phosphate isomerase (533 aa).

The active-site Proton donor is the Glu-341. Active-site residues include His-372 and Lys-501.

This sequence belongs to the GPI family.

It is found in the cytoplasm. It carries out the reaction alpha-D-glucose 6-phosphate = beta-D-fructose 6-phosphate. Its pathway is carbohydrate biosynthesis; gluconeogenesis. It functions in the pathway carbohydrate degradation; glycolysis; D-glyceraldehyde 3-phosphate and glycerone phosphate from D-glucose: step 2/4. In terms of biological role, catalyzes the reversible isomerization of glucose-6-phosphate to fructose-6-phosphate. This chain is Glucose-6-phosphate isomerase, found in Cereibacter sphaeroides (strain ATCC 17029 / ATH 2.4.9) (Rhodobacter sphaeroides).